The chain runs to 176 residues: Peptide deformylase 1 (176 aa).

Fe cation contacts are provided by C99 and H141. E142 is an active-site residue. H145 is a Fe cation binding site.

It belongs to the polypeptide deformylase family. Fe(2+) is required as a cofactor.

The catalysed reaction is N-terminal N-formyl-L-methionyl-[peptide] + H2O = N-terminal L-methionyl-[peptide] + formate. Functionally, removes the formyl group from the N-terminal Met of newly synthesized proteins. Requires at least a dipeptide for an efficient rate of reaction. N-terminal L-methionine is a prerequisite for activity but the enzyme has broad specificity at other positions. This Bordetella pertussis (strain Tohama I / ATCC BAA-589 / NCTC 13251) protein is Peptide deformylase 1.